The primary structure comprises 491 residues: Malonate-semialdehyde dehydrogenase 1 (491 aa).

NAD(+) is bound by residues alanine 154, phenylalanine 156, lysine 180, glutamate 183, arginine 184, serine 233, and threonine 255. Cysteine 288 serves as the catalytic Nucleophile. Glutamate 386 contacts NAD(+).

It belongs to the aldehyde dehydrogenase family. IolA subfamily. In terms of assembly, homotetramer.

It catalyses the reaction 3-oxopropanoate + NAD(+) + CoA + H2O = hydrogencarbonate + acetyl-CoA + NADH + H(+). The catalysed reaction is 2-methyl-3-oxopropanoate + NAD(+) + CoA + H2O = propanoyl-CoA + hydrogencarbonate + NADH + H(+). Its pathway is polyol metabolism; myo-inositol degradation into acetyl-CoA; acetyl-CoA from myo-inositol: step 7/7. Catalyzes the oxidation of malonate semialdehyde (MSA) and methylmalonate semialdehyde (MMSA) into acetyl-CoA and propanoyl-CoA, respectively. Is involved in a myo-inositol catabolic pathway. Bicarbonate, and not CO2, is the end-product of the enzymatic reaction. This Shouchella clausii (strain KSM-K16) (Alkalihalobacillus clausii) protein is Malonate-semialdehyde dehydrogenase 1.